Reading from the N-terminus, the 131-residue chain is MIIGLGNDLVDIRRIEDSLERFGERFIAKVFTEAERATAERRSGRARSGAYAKRFAAKEALVKALGKDGVSWRDIEVANDGDGRPFLSLSGGAAALLARRIPAGMIARLHLSLSDDYPLAQAVVIVEAQPA.

The Mg(2+) site is built by aspartate 8 and glutamate 59.

It belongs to the P-Pant transferase superfamily. AcpS family. Mg(2+) is required as a cofactor.

The protein resides in the cytoplasm. The catalysed reaction is apo-[ACP] + CoA = holo-[ACP] + adenosine 3',5'-bisphosphate + H(+). Functionally, transfers the 4'-phosphopantetheine moiety from coenzyme A to a Ser of acyl-carrier-protein. This chain is Holo-[acyl-carrier-protein] synthase, found in Paramagnetospirillum magneticum (strain ATCC 700264 / AMB-1) (Magnetospirillum magneticum).